Reading from the N-terminus, the 597-residue chain is Vacuolar protein sorting-associated protein 33A (597 aa).

It belongs to the STXBP/unc-18/SEC1 family. As to quaternary structure, core component of at least two putative endosomal tethering complexes, the homotypic fusion and vacuole protein sorting (HOPS) complex and the class C core vacuole/endosome tethering (CORVET) complex. Their common core is composed of the class C Vps proteins VPS11, VPS16, VPS18 and VPS33A, which in HOPS further associates with VPS39 and VPS41 and in CORVET with VPS8 and TGFBRAP1. Interacts with RAB5C, UVRAG, STX17, MON1A and MON1B. Associates with adaptor protein complex 3 (AP-3) and clathrin. Interacts with PLEKHM1. Ubiquitous.

Its subcellular location is the cytoplasmic vesicle. The protein resides in the late endosome membrane. It localises to the lysosome membrane. The protein localises to the early endosome. It is found in the autophagosome. Its subcellular location is the clathrin-coated vesicle. Plays a role in vesicle-mediated protein trafficking to lysosomal compartments including the endocytic membrane transport and autophagic pathways. Believed to act as a core component of the putative HOPS and CORVET endosomal tethering complexes which are proposed to be involved in the Rab5-to-Rab7 endosome conversion probably implicating MON1A/B, and via binding SNAREs and SNARE complexes to mediate tethering and docking events during SNARE-mediated membrane fusion. The HOPS complex is proposed to be recruited to Rab7 on the late endosomal membrane and to regulate late endocytic, phagocytic and autophagic traffic towards lysosomes. The CORVET complex is proposed to function as a Rab5 effector to mediate early endosome fusion probably in specific endosome subpopulations. Required for fusion of endosomes and autophagosomes with lysosomes; the function is dependent on its association with VPS16 but not VIPAS39. The function in autophagosome-lysosome fusion implicates STX17 but not UVRAG. This chain is Vacuolar protein sorting-associated protein 33A (Vps33a), found in Rattus norvegicus (Rat).